The primary structure comprises 507 residues: uncharacterized protein (507 aa).

Transmembrane regions (helical) follow at residues 11–31 (ILCF…IFPI), 97–117 (AWIA…YGHL), 125–145 (PVSF…GFAP), 149–169 (VFAV…IVFY), 187–207 (FFNW…CGYW), 209–229 (SAAI…LWLP), 283–303 (LFSS…WFST), 326–346 (FVQA…DLFI), 354–374 (LHQV…ALMI), 388–408 (LAII…WDAC), 423–443 (IGIG…PQMA), and 452–472 (IPYI…CFFL).

This sequence belongs to the major facilitator superfamily.

The protein localises to the membrane. This is an uncharacterized protein from Caenorhabditis elegans.